A 475-amino-acid polypeptide reads, in one-letter code: Probable dolichyl pyrophosphate Man9GlcNAc2 alpha-1,3-glucosyltransferase (475 aa).

Helical transmembrane passes span 114–133 (VVSA…AYSL), 161–181 (GHFQ…AAIL), 235–255 (AVVL…LQAV), 296–316 (MALV…VLLF), 322–342 (VGFL…SFQV), 385–405 (LLVP…CFDS), 418–438 (IANI…TVPA), and 441–461 (KYPD…FFLF).

It belongs to the ALG6/ALG8 glucosyltransferase family.

The protein localises to the endoplasmic reticulum membrane. It carries out the reaction an alpha-D-Man-(1-&gt;2)-alpha-D-Man-(1-&gt;2)-alpha-D-Man-(1-&gt;3)-[alpha-D-Man-(1-&gt;2)-alpha-D-Man-(1-&gt;3)-[alpha-D-Man-(1-&gt;2)-alpha-D-Man-(1-&gt;6)]-alpha-D-Man-(1-&gt;6)]-beta-D-Man-(1-&gt;4)-beta-D-GlcNAc-(1-&gt;4)-alpha-D-GlcNAc-diphospho-di-trans,poly-cis-dolichol + a di-trans,poly-cis-dolichyl beta-D-glucosyl phosphate = an alpha-D-Glc-(1-&gt;3)-alpha-D-Man-(1-&gt;2)-alpha-D-Man-(1-&gt;2)-alpha-D-Man-(1-&gt;3)-[alpha-D-Man-(1-&gt;2)-alpha-D-Man-(1-&gt;3)-[alpha-D-Man-(1-&gt;2)-alpha-D-Man-(1-&gt;6)]-alpha-D-Man-(1-&gt;6)]-beta-D-Man-(1-&gt;4)-beta-D-GlcNAc-(1-&gt;4)-alpha-D-GlcNAc-diphospho-di-trans,poly-cis-dolichol + a di-trans,poly-cis-dolichyl phosphate + H(+). Its pathway is protein modification; protein glycosylation. Functionally, adds the first glucose residue to the lipid-linked oligosaccharide precursor for N-linked glycosylation. Transfers glucose from dolichyl phosphate glucose (Dol-P-Glc) onto the lipid-linked oligosaccharide Man(9)GlcNAc(2)-PP-Dol. Involved in cuticle differentiation. In Drosophila melanogaster (Fruit fly), this protein is Probable dolichyl pyrophosphate Man9GlcNAc2 alpha-1,3-glucosyltransferase (gny).